A 706-amino-acid chain; its full sequence is GDNF-inducible zinc finger protein 1 (706 aa).

The BTB domain occupies 31-103 (CDVTVSIENQ…VYTAKVRVEE (73 aa)). Residues 149–165 (VEASSGPQVSVTPSSKA) are compositionally biased toward polar residues. 2 disordered regions span residues 149-220 (VEAS…PKIR) and 242-308 (RRLR…KDGE). Composition is skewed to basic and acidic residues over residues 197–212 (PSKKCKEKLDKKKDVA) and 242–277 (RRLREQQKSAEEAAENDKCPQDQSPDNERMETEPAA). 10 C2H2-type zinc fingers span residues 315-337 (FQCTVCDKAFLYEKSFLKHIKYH), 346-369 (YRCDTCGQTFANRCNLKSHQRHVH), 375-398 (FPCEMCAKKFKRKKDVKRHVLQVH), 405-427 (HRCGQCGKGLSSKTALRLHERTH), 433-455 (YGCTKCDAKFSQPSALKTHLRVH), 461-483 (FVCDECGARFTQNHMLIYHKRCH), 489-511 (FMCETCGKSFASKEYLKHHNRIH), 517-539 (FKCEVCLRTFAQRNSLYQHIKVH), 545-567 (YCCDQCGKQFTQVNALQRHHRIH), and 573-595 (YMCNACGRTFTDKSTLRRHTSIH). Ser-611 carries the phosphoserine modification.

It belongs to the krueppel C2H2-type zinc-finger protein family. As to quaternary structure, interacts with NCL. In terms of tissue distribution, expressed in several tissues, with highest levels in liver. Also expressed in embryos from 7 to 17 dpc.

Its subcellular location is the nucleus. It localises to the cytoplasm. The protein resides in the nucleolus. In terms of biological role, transcriptional repressor that binds the GZF1 responsive element (GRE) (consensus: 5'-TGCGCN[TG][CA]TATA-3'). May be regulating VSX2/HOX10 expression. The sequence is that of GDNF-inducible zinc finger protein 1 from Mus musculus (Mouse).